Here is a 376-residue protein sequence, read N- to C-terminus: MAKEIESATDLGDTNIKGVLVHGGRYFQYNVYGNLFEVSNKYVPPIRPIGRGAYGFVCAAVDSETHEEIAIKKIGKAFDNKVDAKRTLREIKLLRHLEHENVVVIKDIIRPPKKEDFVDVYIVFELMDTDLHQIIRSNQSLNDDHCQYFLYQILRGLKYIHSANVLHRDLKPSNLLLNSNCDLKITDFGLARTTSETEYMTEYVVTRWYRAPELLLNSSEYTSAIDVWSVGCIFAEIMTREPLFPGKDYVHQLKLITELIGSPDGASLEFLRSANARKYVKELPKFPRQNFSARFPSMNSTAIDLLEKMLVFDPVKRITVEEALCYPYLSALHDLNDEPVCSNHFSFHFEDPSSTEEEIKELVWLESVKFNPLPSI.

Residues 43 to 329 form the Protein kinase domain; it reads VPPIRPIGRG…VEEALCYPYL (287 aa). ATP-binding positions include 49 to 57 and lysine 72; that span reads IGRGAYGFV. Catalysis depends on aspartate 169, which acts as the Proton acceptor. Threonine 201 carries the post-translational modification Phosphothreonine. The TXY signature appears at 201–203; it reads TEY. Phosphotyrosine is present on tyrosine 203. Threonine 206 is subject to Phosphothreonine.

Belongs to the protein kinase superfamily. CMGC Ser/Thr protein kinase family. MAP kinase subfamily. Post-translationally, autophosphorylated on threonine and tyrosine residues. In terms of processing, dually phosphorylated on Thr-201 and Tyr-203, which activates the enzyme.

The enzyme catalyses L-seryl-[protein] + ATP = O-phospho-L-seryl-[protein] + ADP + H(+). It catalyses the reaction L-threonyl-[protein] + ATP = O-phospho-L-threonyl-[protein] + ADP + H(+). Its activity is regulated as follows. Activated by threonine and tyrosine phosphorylation. Activated by the MAP kinase kinase MKK2. Activated by the MAP kinase kinase MKK6 in vitro. In Arabidopsis thaliana (Mouse-ear cress), this protein is Mitogen-activated protein kinase 5 (MPK5).